Here is a 415-residue protein sequence, read N- to C-terminus: Squalene synthase 11 (415 aa).

The next 2 membrane-spanning stretches (helical) occupy residues 281–301 (AIFRFCAIPQIMAIGTLALCF) and 392–412 (LIIILFIILAILYAYLSSNLP).

It belongs to the phytoene/squalene synthase family. Mg(2+) serves as cofactor. Mn(2+) is required as a cofactor.

Its subcellular location is the endoplasmic reticulum membrane. The enzyme catalyses 2 (2E,6E)-farnesyl diphosphate + NADH + H(+) = squalene + 2 diphosphate + NAD(+). It carries out the reaction 2 (2E,6E)-farnesyl diphosphate + NADPH + H(+) = squalene + 2 diphosphate + NADP(+). It functions in the pathway terpene metabolism; lanosterol biosynthesis; lanosterol from farnesyl diphosphate: step 1/3. Its function is as follows. Component of the triterpene saponins (e.g. ginsenosides or panaxosides) and phytosterols biosynthetic pathways. Catalyzes the biosynthesis of squalene. The chain is Squalene synthase 11 from Panax ginseng (Korean ginseng).